The sequence spans 186 residues: MASKVVFFAAALMAAMVAISGAQLSESEMRFRDRQCQREVQDSPLDACRQVLDRQLTGRERFQPMFRRPGALGLRMQCCQQLQDVSRECRCAAIRRMVRSYEESMPMPLEQGWSSSSSEYYGGEGSSSEQGYYGEGSSEEGYYGEQQQQPGMTRVRLTRARQYAAQLPSMCRVEPQQCSIFAAGQY.

A signal peptide spans 1-22 (MASKVVFFAAALMAAMVAISGA). The segment at 108 to 155 (PLEQGWSSSSSEYYGGEGSSSEQGYYGEGSSEEGYYGEQQQQPGMTRV) is disordered. Positions 110–149 (EQGWSSSSSEYYGGEGSSSEQGYYGEGSSEEGYYGEQQQQ) are enriched in low complexity.

The protein belongs to the 2S seed storage albumins family.

The protein localises to the secreted. Seed storage protein. This chain is 19 kDa globulin, found in Oryza sativa subsp. japonica (Rice).